A 213-amino-acid polypeptide reads, in one-letter code: MAIDKSIPKATAKRLSLYYRIFKRFYADQVEKASSKQIADAMGIDSATVRRDFSYFGELGRRGFGYDVTKLMNFFADLLNDHSTTNVLLVGCGNIGRALLHYRFHDRNKMQISMGFDVDDHPMVGTKTADGIPIYGISTINDHVKKADIETAILTVPSTHAQEVADQLIEAGIRGILSFSPVHLQVPKGIIVQYVDLTSELQTLLYFMNQSQD.

The segment at residues 17–56 is a DNA-binding region (H-T-H motif); it reads LYYRIFKRFYADQVEKASSKQIADAMGIDSATVRRDFSYF. 91-96 contributes to the NAD(+) binding site; it reads GCGNIG.

Belongs to the transcriptional regulatory Rex family. In terms of assembly, homodimer.

The protein localises to the cytoplasm. Its function is as follows. Modulates transcription in response to changes in cellular NADH/NAD(+) redox state. The polypeptide is Redox-sensing transcriptional repressor Rex (Streptococcus uberis (strain ATCC BAA-854 / 0140J)).